A 431-amino-acid chain; its full sequence is C4-dicarboxylate transport protein (431 aa).

The next 8 helical transmembrane spans lie at 8–28 (ILYV…HFWP), 44–64 (LIKM…IAGM), 78–98 (LLYF…AAHL), 148–168 (GDIL…AAIG), 188–208 (IVHV…AFTI), 222–242 (LIGT…GAIA), 307–327 (IYMT…LTLL), and 355–375 (AATL…ILGI).

It belongs to the dicarboxylate/amino acid:cation symporter (DAACS) (TC 2.A.23) family.

It localises to the cell inner membrane. Its function is as follows. Responsible for the transport of dicarboxylates such as succinate, fumarate, and malate from the periplasm across the membrane. This Cupriavidus pinatubonensis (strain JMP 134 / LMG 1197) (Cupriavidus necator (strain JMP 134)) protein is C4-dicarboxylate transport protein.